We begin with the raw amino-acid sequence, 257 residues long: Probable amino-acid ABC transporter-binding protein HI_1080 (257 aa).

The N-terminal stretch at 1–23 (MKKLLFTTALLTGAIAFSTFSHA) is a signal peptide.

Belongs to the bacterial solute-binding protein 3 family.

It is found in the periplasm. Probably part of a binding-protein-dependent transport system for an amino acid. This is Probable amino-acid ABC transporter-binding protein HI_1080 from Haemophilus influenzae (strain ATCC 51907 / DSM 11121 / KW20 / Rd).